An 84-amino-acid polypeptide reads, in one-letter code: Translation initiation factor IF-1, chloroplastic (84 aa).

An S1-like domain is found at 1–72 (MKKQNLVEME…SKGRITYRLR (72 aa)).

The protein belongs to the IF-1 family. In terms of assembly, component of the 30S ribosomal translation pre-initiation complex which assembles on the 30S ribosome in the order IF-2 and IF-3, IF-1 and N-formylmethionyl-tRNA(fMet); mRNA recruitment can occur at any time during PIC assembly.

The protein localises to the plastid. It is found in the chloroplast. One of the essential components for the initiation of protein synthesis. Stabilizes the binding of IF-2 and IF-3 on the 30S subunit to which N-formylmethionyl-tRNA(fMet) subsequently binds. Helps modulate mRNA selection, yielding the 30S pre-initiation complex (PIC). Upon addition of the 50S ribosomal subunit IF-1, IF-2 and IF-3 are released leaving the mature 70S translation initiation complex. The protein is Translation initiation factor IF-1, chloroplastic of Spirogyra maxima (Green alga).